The following is a 479-amino-acid chain: CBL-interacting serine/threonine-protein kinase 10 (479 aa).

Residues 12–266 (YDVGRLLGQG…IARIRESSWF (255 aa)) enclose the Protein kinase domain. ATP is bound by residues 18-26 (LGQGTFAKV) and Lys-41. The active-site Proton acceptor is the Asp-134. The interval 152–181 (DFGLSALADCKRQDGLLHTTCGTPAYVAPE) is activation loop. Ser-156 bears the Phosphoserine mark. Thr-170 bears the Phosphothreonine mark. The interval 286–323 (SVEAGTAGTNENGAGPSENGAGPSENGDRVTEENHTDE) is disordered. The span at 288–300 (EAGTAGTNENGAG) shows a compositional bias: low complexity. Positions 311 to 323 (NGDRVTEENHTDE) are enriched in basic and acidic residues. The NAF domain occupies 322–346 (DEPTNLNAFDLIALSAGFDLAGLFG). The tract at residues 350–379 (KRESRFTSQKPASVIISKLEEVAQRLKLSI) is PPI. Positions 456-479 (SQQETEYQQQQQQEQQEQEEPLKF) are disordered. The segment covering 457–470 (QQETEYQQQQQQEQ) has biased composition (low complexity).

It belongs to the protein kinase superfamily. CAMK Ser/Thr protein kinase family. SNF1 subfamily. As to quaternary structure, interacts with CBL4/SOS3. The cofactor is Mn(2+). As to expression, mostly expressed in roots.

The enzyme catalyses L-seryl-[protein] + ATP = O-phospho-L-seryl-[protein] + ADP + H(+). The catalysed reaction is L-threonyl-[protein] + ATP = O-phospho-L-threonyl-[protein] + ADP + H(+). Its function is as follows. CIPK serine-threonine protein kinases interact with CBL proteins. Binding of a CBL protein to the regulatory NAF domain of CIPK protein lead to the activation of the kinase in a calcium-dependent manner. The polypeptide is CBL-interacting serine/threonine-protein kinase 10 (CIPK10) (Arabidopsis thaliana (Mouse-ear cress)).